The following is a 470-amino-acid chain: MMMMGDSFGSIGSSMASLFFLWATIQQIFPDHLKITIKEFLLSSFQQLCFAQRVSDHFTNLFSPYVEIHFPESDEYSFNQAFSAIDTYLDSKATDKTKHLRGSQVKESKGLVLKRNEAKVRDEYKGANVWWERVVDNDGNRYYKLTFHNRARTLITNSYIKYVVEEGKSIIVKNKQTRLFTNNLSTQWVFGQNMWRSIEFEHPASFQTLAMDPKKKEEIVNDLIAFSNGKEYYKKIGKAWKRGYLLYGPPGTGKSTMISAMANLLNYNIYDLELTAVKNNSELKKLLTATSSKSIIVIEDIDCSADFTSNRIKKESNSRERYGKEDKDENSVTLSGLLNFIDGIWSACGQERIVVFTTNHLEKLDPALIRRGRMDMHIELSYCTYEAFKILAKNYLDLDGDDAHPLFSEIKALLEETKISPADVAENLMARNQQIDVDKSLNLLISALEEENQYQRSQQEKKKSKFKIFG.

The signal sequence occupies residues 1-30 (MMMMGDSFGSIGSSMASLFFLWATIQQIFP). Residue 248-255 (GPPGTGKS) participates in ATP binding.

Belongs to the AAA ATPase family. BCS1 subfamily. The cofactor is Mg(2+).

It catalyses the reaction ATP + H2O = ADP + phosphate + H(+). This chain is AAA-ATPase At5g40000, found in Arabidopsis thaliana (Mouse-ear cress).